Here is a 90-residue protein sequence, read N- to C-terminus: Small ribosomal subunit protein uS15 (90 aa).

It belongs to the universal ribosomal protein uS15 family. Part of the 30S ribosomal subunit. Forms a bridge to the 50S subunit in the 70S ribosome, contacting the 23S rRNA.

Functionally, one of the primary rRNA binding proteins, it binds directly to 16S rRNA where it helps nucleate assembly of the platform of the 30S subunit by binding and bridging several RNA helices of the 16S rRNA. Forms an intersubunit bridge (bridge B4) with the 23S rRNA of the 50S subunit in the ribosome. This Campylobacter jejuni subsp. jejuni serotype O:6 (strain 81116 / NCTC 11828) protein is Small ribosomal subunit protein uS15.